Reading from the N-terminus, the 150-residue chain is UPF0260 protein CGSHiGG_00425 (150 aa).

The protein belongs to the UPF0260 family.

In Haemophilus influenzae (strain PittGG), this protein is UPF0260 protein CGSHiGG_00425.